The chain runs to 424 residues: Ubiquitin carboxyl-terminal hydrolase 12/46 homolog (424 aa).

One can recognise a USP domain in the interval 24–421 (FGLVNFGNTC…TGYILFYQSR (398 aa)). Catalysis depends on Cys33, which acts as the Nucleophile. The segment at 131 to 189 (NAGPSNGNPKATNQGGSTSAMASSIASKSSSTSNSNSNSNSTTNSNGNSSNSTGSLNAN) is disordered. Over residues 133-144 (GPSNGNPKATNQ) the composition is skewed to polar residues. Over residues 145-189 (GGSTSAMASSIASKSSSTSNSNSNSNSTTNSNGNSSNSTGSLNAN) the composition is skewed to low complexity. His369 acts as the Proton acceptor in catalysis.

The protein belongs to the peptidase C19 family. In terms of assembly, catalytic component of the Usp12-46 deubiquitylase complex consisting of Usp12-46, Wdr20 and Uaf1. The Usp12-46 deubiquitylase complex associates with arr/arrow; the interaction leads to deubiquitination and stabilization of arr/arrow.

The enzyme catalyses Thiol-dependent hydrolysis of ester, thioester, amide, peptide and isopeptide bonds formed by the C-terminal Gly of ubiquitin (a 76-residue protein attached to proteins as an intracellular targeting signal).. Its function is as follows. Catalytic component of the Usp12-46 deubiquitylase complex. Deubiquitylates the wg/wingless-signaling receptor arr/arrow, which stabilizes the receptor and increases its concentration at the cell surface; this enhances the sensitivity of cells to wg/wingless-signal stimulation. This increases the amplitude and spatial range of the signaling response to the wg/wingless morphogen gradient, facilitating the precise, concentration-dependent regulation of its target genes. Required for wg/wingless-mediated signaling in the wing imaginal disc and for wg/wingless-dependent regulation of adult intestinal stem cell proliferation. Negative regulator of Notch signaling, possibly by regulating lysosomal degradation of N/Notch and affecting cell surface receptor levels; this may be context and cell-type specific function involved in external sensory organ development but not in wing imaginal-disc dorsoventral boundary signaling. Protects against HTT/huntingtin-induced polyglutamine expansion-dependent neurodegeneration. The polypeptide is Ubiquitin carboxyl-terminal hydrolase 12/46 homolog (Drosophila melanogaster (Fruit fly)).